We begin with the raw amino-acid sequence, 133 residues long: Acyl-CoA thioesterase YbgC (133 aa).

Asp-11 is an active-site residue.

It belongs to the 4-hydroxybenzoyl-CoA thioesterase family. Homotetramer. May interact with CagA.

Its function is as follows. Thioesterase that may be involved in phospholipid metabolism. Displays acyl-CoA thioesterase activity with lauroyl-CoA (C12:0), myristoyl-CoA (C14:0), palmitoyl-CoA (C16:0), stearoyl-CoA (C18:0) and benzoyl-CoA, catalyzing the hydrolysis of the thioester bond. Has low activity with butyryl-CoA and octanoyl-CoA. This is Acyl-CoA thioesterase YbgC (ybgC) from Helicobacter pylori (strain ATCC 700392 / 26695) (Campylobacter pylori).